A 278-amino-acid chain; its full sequence is Bifunctional protein FolD (278 aa).

NADP(+)-binding positions include glycine 165 to serine 167 and serine 190.

Belongs to the tetrahydrofolate dehydrogenase/cyclohydrolase family. Homodimer.

The catalysed reaction is (6R)-5,10-methylene-5,6,7,8-tetrahydrofolate + NADP(+) = (6R)-5,10-methenyltetrahydrofolate + NADPH. It catalyses the reaction (6R)-5,10-methenyltetrahydrofolate + H2O = (6R)-10-formyltetrahydrofolate + H(+). Its pathway is one-carbon metabolism; tetrahydrofolate interconversion. Catalyzes the oxidation of 5,10-methylenetetrahydrofolate to 5,10-methenyltetrahydrofolate and then the hydrolysis of 5,10-methenyltetrahydrofolate to 10-formyltetrahydrofolate. This Clostridium tetani (strain Massachusetts / E88) protein is Bifunctional protein FolD.